We begin with the raw amino-acid sequence, 730 residues long: Synaptogenesis protein syg-1 (730 aa).

Positions 1–18 (MVRWQTWPLLLLFQLVTC) are cleaved as a signal peptide. At 19–551 (QQLQQRIVEA…WIVITAKFDR (533 aa)) the chain is on the extracellular side. Ig-like domains lie at 23–123 (QRIV…AKLT), 131–265 (PKIV…VKLS), 270–352 (PQIN…IKLN), 357–433 (ARIM…QILS), and 441–540 (PPTV…RNIL). 5 disulfides stabilise this stretch: Cys-44/Cys-104, Cys-152/Cys-246, Cys-292/Cys-336, Cys-378/Cys-420, and Cys-462/Cys-519. N-linked (GlcNAc...) asparagine glycans are attached at residues Asn-93 and Asn-206. A helical membrane pass occupies residues 552–572 (MVALAIISAGVLLVSLLCCLC). Over 573 to 730 (MCRSNCRSRK…RPISRTSTHV (158 aa)) the chain is Cytoplasmic.

This sequence belongs to the immunoglobulin superfamily. In terms of assembly, interacts with skr-1. Interacts with syg-2. Interacts with the WAVE regulatory complex; the interaction leads to formation of a synaptic F-actin network that is required for synapse formation and axon branching. As to expression, expression in head motor neurons, occasionally in HSN neurons and weakly in other cells in the vulval region. Expressed in the primary synapse region of HSNL motor neuron.

Its subcellular location is the cell membrane. It localises to the cell projection. The protein localises to the axon. The protein resides in the synapse. Functionally, cell adhesion protein. Involved in synapse formation in the HSNL egg-laying motor neuron. Inhibits assembly of the SCF(sel-10) E3 ubiquitin ligase complex at synapses, and protects them from elimination. Also required for F-actin assembly at the synaptic region and for axon branch formation. This Caenorhabditis elegans protein is Synaptogenesis protein syg-1.